Reading from the N-terminus, the 505-residue chain is ATP-dependent RNA helicase HAS1 (505 aa).

Positions 1–37 are disordered; the sequence is MATPSNKRSRDSESTEEPVVDEKSTSKQNNAAPEGEQ. The residue at position 12 (Ser12) is a Phosphoserine. A compositionally biased stretch (polar residues) spans 26–37; that stretch reads SKQNNAAPEGEQ. A Q motif motif is present at residues 42–70; the sequence is EKFEELKLSQPTLKAIEKMGFTTMTSVQA. The Helicase ATP-binding domain maps to 73–249; that stretch reads IPPLLAGRDV…RISLRPGPLF (177 aa). 86–93 serves as a coordination point for ATP; that stretch reads AKTGSGKT. The short motif at 196–199 is the DEAD box element; that stretch reads DEAD. The Helicase C-terminal domain occupies 263 to 433; sequence GLEQGYVVCD…NVQSQLEKLI (171 aa). The Bipartite nuclear localization signal motif lies at 275-291; it reads KRFLLLFSFLKRNQKKK.

Belongs to the DEAD box helicase family. DDX18/HAS1 subfamily. As to quaternary structure, interacts with RRP1. Associates in the nucleolus with the 60S and pre-60S ribosomal subunits. It has also been isolated with the nuclear pore complex. Phosphorylated by CDK1.

The protein localises to the nucleus. It localises to the nucleolus. The enzyme catalyses ATP + H2O = ADP + phosphate + H(+). ATP-dependent RNA helicase involved in 40S ribosomal subunit biogenesis. Required for the processing and cleavage of 35S pre-rRNA at sites A0, A1, and A2, leading to mature 18S rRNA. The protein is ATP-dependent RNA helicase HAS1 (HAS1) of Saccharomyces cerevisiae (strain ATCC 204508 / S288c) (Baker's yeast).